The following is a 158-amino-acid chain: SsrA-binding protein (158 aa).

The tract at residues Lys130 to Gly158 is disordered. Basic and acidic residues predominate over residues Asp136–Gly158.

Belongs to the SmpB family.

It localises to the cytoplasm. In terms of biological role, required for rescue of stalled ribosomes mediated by trans-translation. Binds to transfer-messenger RNA (tmRNA), required for stable association of tmRNA with ribosomes. tmRNA and SmpB together mimic tRNA shape, replacing the anticodon stem-loop with SmpB. tmRNA is encoded by the ssrA gene; the 2 termini fold to resemble tRNA(Ala) and it encodes a 'tag peptide', a short internal open reading frame. During trans-translation Ala-aminoacylated tmRNA acts like a tRNA, entering the A-site of stalled ribosomes, displacing the stalled mRNA. The ribosome then switches to translate the ORF on the tmRNA; the nascent peptide is terminated with the 'tag peptide' encoded by the tmRNA and targeted for degradation. The ribosome is freed to recommence translation, which seems to be the essential function of trans-translation. The sequence is that of SsrA-binding protein from Ruegeria sp. (strain TM1040) (Silicibacter sp.).